A 1013-amino-acid polypeptide reads, in one-letter code: PHD finger protein 20-like protein 1 (1013 aa).

Residues 11-71 form the Tudor 1 domain; that stretch reads ITFEIGARLE…SNRLRPLERP (61 aa). Residues Lys75 and Lys79 each participate in a glycyl lysine isopeptide (Lys-Gly) (interchain with G-Cter in SUMO2) cross-link. One can recognise a Tudor 2 domain in the interval 85–141; it reads FDFKAGEEVLARWTDCRYYPAKIEAINKEGTFTVQFYDGVIRCLKRMHIKAMPEDAK. Disordered stretches follow at residues 183 to 206, 309 to 368, 389 to 454, and 482 to 511; these read AKNK…RDGG, EQAI…TPKS, VINK…QSSV, and VTGS…FANP. The span at 315–346 shows a compositional bias: polar residues; it reads KPQSQKKNEAVISSSANTQKPALLSSTLSSGK. Ser368 is modified (phosphoserine). Positions 404 to 415 are enriched in basic residues; sequence PCKHSERRRRSQ. At Ser432 the chain carries Phosphoserine. A compositionally biased stretch (low complexity) spans 443–453; the sequence is SISSQNQQQSS. Residues 496-505 are compositionally biased toward basic and acidic residues; the sequence is ECPREEKEET. Lys530 participates in a covalent cross-link: Glycyl lysine isopeptide (Lys-Gly) (interchain with G-Cter in SUMO2). The segment covering 533-565 has biased composition (basic and acidic residues); the sequence is KKVKLEEKTSTAFGKRKEKDKEKKEKRDKDHYK. The segment at 533 to 585 is disordered; sequence KKVKLEEKTSTAFGKRKEKDKEKKEKRDKDHYKPKQKKKKKKKKKSKQHDYSD. Basic residues predominate over residues 566 to 579; that stretch reads PKQKKKKKKKKKSK. The PHD-type zinc finger occupies 681-729; it reads IVRCICELDEENGFMIQCEECLCWQHSVCMGLLEDSIPEQYICYICRDP. Positions 824 to 852 are enriched in basic and acidic residues; it reads RKITPQDRANSEGKECVQNHKEPALRMEE. The interval 824 to 911 is disordered; that stretch reads RKITPQDRAN…LLYKNRGVSE (88 aa). The span at 854–878 shows a compositional bias: polar residues; it reads YITSEHSYQKPQSFSQDCQSLTDPG. Over residues 879 to 892 the composition is skewed to acidic residues; it reads SSDDDDASSFEEDG. Lys905 carries the post-translational modification N6-acetyllysine.

As to quaternary structure, interacts with methylated DNMT1 (DNMT1K142me1). Interacts with SOX2.

Its subcellular location is the nucleus. Functionally, is a negative regulator of proteasomal degradation of a set of methylated proteins, including DNMT1 and SOX2. Involved in the maintainance of embryonic stem cells pluripotency, through the regulation of SOX2 levels. The protein is PHD finger protein 20-like protein 1 (Phf20l1) of Mus musculus (Mouse).